The following is a 249-amino-acid chain: Capsid protein (249 aa).

The interval 1–33 is disordered; that stretch reads MDTDGDNDVFGSGNDTRNNDDKKKEEMKQNISD. A compositionally biased stretch (basic and acidic residues) spans 17 to 28; the sequence is RNNDDKKKEEMK.

It belongs to the closteroviridae capsid protein family.

The protein localises to the virion. Capsid protein self-assembles to form filamentous capsids, about 650-850 nm in length. In Beta vulgaris (Sugar beet), this protein is Capsid protein.